We begin with the raw amino-acid sequence, 494 residues long: PTS system cellobiose-specific EIIC component (494 aa).

Residues 8 to 481 enclose the PTS EIIC type-3 domain; the sequence is MEKYLVPVAA…IITFVIWVPF (474 aa). The next 9 helical transmembrane spans lie at 32–52, 92–112, 119–139, 188–208, 227–247, 274–294, 355–375, 406–426, and 463–483; these read FIGM…SAIV, ISAL…AFSW, AYGV…FAGL, AYFT…KLML, FLAI…YYII, IFSV…GLHG, AFAW…IILF, VVLN…SVII, and AIVL…PFVI.

The protein resides in the cell membrane. Functionally, the phosphoenolpyruvate-dependent sugar phosphotransferase system (PTS), a major carbohydrate active transport system, catalyzes the phosphorylation of incoming sugar substrates concomitant with their translocation across the cell membrane. Involved in cellobiose transport with PtcA and PtcB. This system can also transport lactose. This chain is PTS system cellobiose-specific EIIC component, found in Lactococcus lactis subsp. lactis (strain IL1403) (Streptococcus lactis).